The sequence spans 637 residues: Poly(U)-binding-splicing factor hfp (637 aa).

Composition is skewed to basic and acidic residues over residues 1–20 (MGSNDRASRSPRSDDQREIS) and 28–37 (TRSDSGKSTD). A disordered region spans residues 1-41 (MGSNDRASRSPRSDDQREISDMPATKRTRSDSGKSTDSKIP). Phosphoserine occurs at positions 13 and 30. RRM domains follow at residues 130 to 208 (CRVY…RPSN) and 227 to 305 (NRIY…RSIT). The region spanning 537–627 (RVIILRNMVG…RRVVAELYDQ (91 aa)) is the RRM 3; atypical domain.

Belongs to the RRM half pint family. As to quaternary structure, interacts with enc. However, given the cytoplasmic localization of enc, the relevance of such interaction is unclear. Expressed in all germline cells and within the follicle cell.

The protein resides in the nucleus. Functionally, splicing factor that regulates oogenesis and controls both mitosis and mRNA localization in the germline by regulating mRNA splicing of a subset of genes within the ovary. Probably acts by regulating the alternative splice site selection of the otu transcript. Also regulates the alternative splicing of eIF4E1 and grk, while it is not involved in the splicing of par-1, sqd or psq. Involved in the alternative splicing of the bicistronic pre-mRNA encoding Kdm3 and CG8176; required for the efficient production of mRNA encoding Kdm3 and Kdm3-mediated regulation of rhino-dependent piRNA production. The polypeptide is Poly(U)-binding-splicing factor hfp (Drosophila melanogaster (Fruit fly)).